The sequence spans 425 residues: MIDLRLLREDPDRVRASQRARGEDVALVDSLLSADERRRSSGVRFDELRSEQKALGKLIPKASPEERAELLKKAEQLKADVKAADVEQHEADEEAKRLLLQLGNLVHPDVPVGGEEDFVVLETHGTIRDFGAEGFEPKDHLELGEALGAIDVERGAKVSGSRFYYLTGVGALLELALVNAAIAQATEAGFIPMLTPALVRPRAMEGTGFLGQASENVYHLEKDDYYLVGTSEVPLAAYHMDEILDADKLPMRYAGFSPCFRREAGTYGKDTRGIFRVHQFDKVEMFSYVAPEDAENEHKRLLEWEKQWLTGLELPFQVIDVASGDLGASATRKFDCEAWIPTQGKYRELTSASNCDSFQARRLSVRMRDGKKVQPLATLNGTLCAVPRTIVAILENHQLPDGSVRVPEMLRPYLGGRELLEPVAK.

L-serine is bound at residue 230 to 232 (TSE). ATP-binding positions include 261–263 (RRE) and Val277. An L-serine-binding site is contributed by Glu284. ATP is bound at residue 348 to 351 (ELTS). Thr382 lines the L-serine pocket.

This sequence belongs to the class-II aminoacyl-tRNA synthetase family. Type-1 seryl-tRNA synthetase subfamily. Homodimer. The tRNA molecule binds across the dimer.

The protein localises to the cytoplasm. The enzyme catalyses tRNA(Ser) + L-serine + ATP = L-seryl-tRNA(Ser) + AMP + diphosphate + H(+). The catalysed reaction is tRNA(Sec) + L-serine + ATP = L-seryl-tRNA(Sec) + AMP + diphosphate + H(+). Its pathway is aminoacyl-tRNA biosynthesis; selenocysteinyl-tRNA(Sec) biosynthesis; L-seryl-tRNA(Sec) from L-serine and tRNA(Sec): step 1/1. Its function is as follows. Catalyzes the attachment of serine to tRNA(Ser). Is also able to aminoacylate tRNA(Sec) with serine, to form the misacylated tRNA L-seryl-tRNA(Sec), which will be further converted into selenocysteinyl-tRNA(Sec). The protein is Serine--tRNA ligase 1 of Streptomyces avermitilis (strain ATCC 31267 / DSM 46492 / JCM 5070 / NBRC 14893 / NCIMB 12804 / NRRL 8165 / MA-4680).